Here is a 226-residue protein sequence, read N- to C-terminus: RNA annealing protein YRA1 (226 aa).

The interval 1–62 (MSANLDKSLD…PIRKNTRAPP (62 aa)) is disordered. N-acetylserine is present on S2. 2 positions are modified to phosphoserine: S8 and S100. An RRM domain is found at 78–158 (VKVNVEGLPR…SRLRLNLIVD (81 aa)). The tract at residues 173-226 (AMPQKGGNAPRPVKRGPNRKAAMAKSQNKPKREKPAKKSLEDLDKEMADYFEKK) is disordered. The segment covering 208 to 226 (AKKSLEDLDKEMADYFEKK) has biased composition (basic and acidic residues).

As to quaternary structure, component of the transcription/export (TREX) complex, which is at least is formed of SUB2, TEX1 and YRA1 and the THO complex composed of HPR1, MFT1, THO2 and THP1. Interacts with RDS3 and YRA2.

The protein resides in the nucleus. Its function is as follows. RNA-binding RNA annealing protein. May have a role in pre-mRNA metabolism. Component the TREX complex, which operates in coupling transcription elongation to mRNA export. This is RNA annealing protein YRA1 (YRA1) from Saccharomyces cerevisiae (strain ATCC 204508 / S288c) (Baker's yeast).